The primary structure comprises 191 residues: Xanthine phosphoribosyltransferase (191 aa).

2 residues coordinate xanthine: Leu-20 and Asn-27. Residue 128-132 participates in 5-phospho-alpha-D-ribose 1-diphosphate binding; it reads ANGQA. Position 156 (Lys-156) interacts with xanthine.

This sequence belongs to the purine/pyrimidine phosphoribosyltransferase family. Xpt subfamily. Homodimer.

It is found in the cytoplasm. The enzyme catalyses XMP + diphosphate = xanthine + 5-phospho-alpha-D-ribose 1-diphosphate. It participates in purine metabolism; XMP biosynthesis via salvage pathway; XMP from xanthine: step 1/1. In terms of biological role, converts the preformed base xanthine, a product of nucleic acid breakdown, to xanthosine 5'-monophosphate (XMP), so it can be reused for RNA or DNA synthesis. This Acinetobacter baylyi (strain ATCC 33305 / BD413 / ADP1) protein is Xanthine phosphoribosyltransferase.